The chain runs to 566 residues: Malate synthase, glyoxysomal (566 aa).

Arginine 182 functions as the Proton acceptor in the catalytic mechanism. The Proton donor role is filled by aspartate 467. Residues 564–566 (SRL) carry the Microbody targeting signal motif.

It belongs to the malate synthase family.

The protein resides in the glyoxysome. The catalysed reaction is glyoxylate + acetyl-CoA + H2O = (S)-malate + CoA + H(+). The protein operates within carbohydrate metabolism; glyoxylate cycle; (S)-malate from isocitrate: step 2/2. This chain is Malate synthase, glyoxysomal, found in Cucurbita maxima (Pumpkin).